Reading from the N-terminus, the 3083-residue chain is Laminin subunit alpha-1 (3083 aa).

An N-terminal signal peptide occupies residues 1 to 24; sequence MRGSGTGAALLVLLASVLWVTVRS. A Pyrrolidone carboxylic acid modification is found at glutamine 25. One can recognise a Laminin N-terminal domain in the interval 25–276; the sequence is QQRGLFPAIL…SIKDISVGGM (252 aa). 6 cysteine pairs are disulfide-bonded: cysteine 277–cysteine 286, cysteine 279–cysteine 297, cysteine 299–cysteine 308, cysteine 311–cysteine 331, cysteine 334–cysteine 343, and cysteine 336–cysteine 368. 4 Laminin EGF-like domains span residues 277–333, 334–403, 404–460, and 461–509; these read CICY…ECEE, CNCH…PCRP, CNCD…NCIP, and CDCR…GCSE. A glycan (N-linked (GlcNAc...) asparagine) is linked at asparagine 370. 10 disulfide bridges follow: cysteine 371/cysteine 380, cysteine 383/cysteine 401, cysteine 404/cysteine 416, cysteine 406/cysteine 434, cysteine 436/cysteine 445, cysteine 448/cysteine 458, cysteine 461/cysteine 474, cysteine 463/cysteine 478, cysteine 480/cysteine 489, and cysteine 492/cysteine 507. The Laminin EGF-like 5; first part domain occupies 510 to 519; the sequence is CFCFGVSGVC. Residues 523-715 form the Laminin IV type A 1 domain; sequence TWSISQVTNM…DLAVAADVEH (193 aa). A glycan (N-linked (GlcNAc...) asparagine) is linked at asparagine 672. One can recognise a Laminin EGF-like 5; second part domain in the interval 716-748; sequence CECPQGYTGTSCEACLPGYYRVDGILFGGICQP. 32 disulfide bridges follow: cysteine 749–cysteine 758, cysteine 751–cysteine 764, cysteine 767–cysteine 776, cysteine 779–cysteine 795, cysteine 798–cysteine 813, cysteine 800–cysteine 823, cysteine 826–cysteine 835, cysteine 838–cysteine 853, cysteine 856–cysteine 870, cysteine 858–cysteine 877, cysteine 880–cysteine 889, cysteine 892–cysteine 906, cysteine 909–cysteine 921, cysteine 911–cysteine 928, cysteine 930–cysteine 939, cysteine 942–cysteine 955, cysteine 958–cysteine 970, cysteine 960–cysteine 976, cysteine 978–cysteine 987, cysteine 990–cysteine 1002, cysteine 1005–cysteine 1014, cysteine 1007–cysteine 1021, cysteine 1023–cysteine 1032, cysteine 1035–cysteine 1048, cysteine 1051–cysteine 1063, cysteine 1053–cysteine 1070, cysteine 1072–cysteine 1081, cysteine 1084–cysteine 1094, cysteine 1097–cysteine 1109, cysteine 1099–cysteine 1125, cysteine 1127–cysteine 1136, and cysteine 1139–cysteine 1154. 8 consecutive Laminin EGF-like domains span residues 749 to 797, 798 to 855, 856 to 908, 909 to 957, 958 to 1004, 1005 to 1050, 1051 to 1096, and 1097 to 1156; these read CECH…DCQP, CACP…TCVP, CNCS…NCRA, CDCH…GCVP, CNCS…GCTP, CDCA…GCQA, CNCS…DCVP, and CGCD…GCSP. The short motif at 1147 to 1149 is the Cell attachment site element; the sequence is RGD. One can recognise a Laminin EGF-like 14; first part domain in the interval 1157-1166; it reads CFCFGLSQLC. The Laminin IV type A 2 domain maps to 1177–1368; it reads ITLASDQPLL…EGEAALLLEL (192 aa). Asparagine 1344 is a glycosylation site (N-linked (GlcNAc...) asparagine). The Laminin EGF-like 14; second part domain occupies 1369-1409; that stretch reads CVCPPGTAGHSCQDCAPGYYREKLPESGGRGPRPLLAPCVP. 12 disulfide bridges follow: cysteine 1410-cysteine 1419, cysteine 1412-cysteine 1426, cysteine 1429-cysteine 1438, cysteine 1441-cysteine 1456, cysteine 1459-cysteine 1473, cysteine 1461-cysteine 1483, cysteine 1486-cysteine 1495, cysteine 1498-cysteine 1513, cysteine 1516-cysteine 1528, cysteine 1518-cysteine 1535, cysteine 1537-cysteine 1546, and cysteine 1549-cysteine 1560. Laminin EGF-like domains follow at residues 1410-1458, 1459-1515, and 1516-1562; these read CNCN…DCTP, CTCP…SCQT, and CDCN…DCVS. The interval 1564–2123 is domain II and I; sequence DDDCVGPLLN…SRARKQVASI (560 aa). The stretch at 1617–1691 forms a coiled coil; the sequence is AKKIRAEIQL…VATLNQTARK (75 aa). N-linked (GlcNAc...) asparagine glycosylation is found at asparagine 1659, asparagine 1686, asparagine 1718, asparagine 1725, asparagine 1763, and asparagine 1811. Residues 1723 to 1809 adopt a coiled-coil conformation; that stretch reads QQNATLELKA…QEKKLRVQEE (87 aa). Residues 1868 to 1901 adopt a coiled-coil conformation; it reads KRRARDLVHRAEQHASELQSRAGALDRDLENVRN. N-linked (GlcNAc...) asparagine glycans are attached at residues asparagine 1935, asparagine 2026, asparagine 2045, and asparagine 2066. Laminin G-like domains follow at residues 2124-2304, 2312-2488, 2493-2679, 2721-2893, and 2898-3078; these read KVAV…CNGC, DSSF…RKGC, IQSV…LDTC, AHQF…VDRC, and QEGT…PHSC. A disulfide bond links cysteine 2278 and cysteine 2304. N-linked (GlcNAc...) asparagine glycosylation is present at asparagine 2355. 2 disulfides stabilise this stretch: cysteine 2464–cysteine 2488 and cysteine 2652–cysteine 2679. Asparagine 2834 carries N-linked (GlcNAc...) asparagine glycosylation. Cysteines 2868 and 2893 form a disulfide. The N-linked (GlcNAc...) asparagine glycan is linked to asparagine 2923. Cysteine 3047 and cysteine 3078 form a disulfide bridge.

In terms of assembly, laminin is a complex glycoprotein, consisting of three different polypeptide chains (alpha, beta, gamma), which are bound to each other by disulfide bonds into a cross-shaped molecule comprising one long and three short arms with globules at each end. Alpha-1 is a subunit of laminin-1 (laminin-111 or EHS laminin) and laminin-3 (laminin-121 or S-laminin). In terms of processing, tyrosine phosphorylated by PKDCC/VLK.

It is found in the secreted. The protein resides in the extracellular space. It localises to the extracellular matrix. Its subcellular location is the basement membrane. Binding to cells via a high affinity receptor, laminin is thought to mediate the attachment, migration and organization of cells into tissues during embryonic development by interacting with other extracellular matrix components. In Mus musculus (Mouse), this protein is Laminin subunit alpha-1 (Lama1).